An 851-amino-acid polypeptide reads, in one-letter code: DNA mismatch repair protein MutS (851 aa).

Gly-614–Ser-621 is an ATP binding site.

This sequence belongs to the DNA mismatch repair MutS family.

This protein is involved in the repair of mismatches in DNA. It is possible that it carries out the mismatch recognition step. This protein has a weak ATPase activity. This chain is DNA mismatch repair protein MutS, found in Serratia proteamaculans (strain 568).